The chain runs to 264 residues: NAD-capped RNA hydrolase NudC (264 aa).

Arginine 70 is a substrate binding site. Positions 99 and 102 each coordinate Zn(2+). Residue glutamate 112 coordinates substrate. Zn(2+)-binding residues include cysteine 117 and cysteine 122. Tyrosine 127 is a substrate binding site. In terms of domain architecture, Nudix hydrolase spans 128–257 (PVICPSIIVA…TIALKLINAT (130 aa)). A divalent metal cation contacts are provided by alanine 166, glutamate 182, and glutamate 186. A Nudix box motif is present at residues 167–188 (GFVEIGESFEQTVEREVFEETG). 200-207 (QPWAFPNS) serves as a coordination point for substrate. Glutamate 227 provides a ligand contact to a divalent metal cation. Alanine 250 lines the substrate pocket.

The protein belongs to the Nudix hydrolase family. NudC subfamily. As to quaternary structure, homodimer. It depends on Mg(2+) as a cofactor. Requires Mn(2+) as cofactor. The cofactor is Zn(2+).

It carries out the reaction a 5'-end NAD(+)-phospho-ribonucleoside in mRNA + H2O = a 5'-end phospho-adenosine-phospho-ribonucleoside in mRNA + beta-nicotinamide D-ribonucleotide + 2 H(+). It catalyses the reaction NAD(+) + H2O = beta-nicotinamide D-ribonucleotide + AMP + 2 H(+). The catalysed reaction is NADH + H2O = reduced beta-nicotinamide D-ribonucleotide + AMP + 2 H(+). Functionally, mRNA decapping enzyme that specifically removes the nicotinamide adenine dinucleotide (NAD) cap from a subset of mRNAs by hydrolyzing the diphosphate linkage to produce nicotinamide mononucleotide (NMN) and 5' monophosphate mRNA. The NAD-cap is present at the 5'-end of some mRNAs and stabilizes RNA against 5'-processing. Has preference for mRNAs with a 5'-end purine. Catalyzes the hydrolysis of a broad range of dinucleotide pyrophosphates. In Actinobacillus succinogenes (strain ATCC 55618 / DSM 22257 / CCUG 43843 / 130Z), this protein is NAD-capped RNA hydrolase NudC.